We begin with the raw amino-acid sequence, 272 residues long: Large ribosomal subunit protein uL2cz/uL2cy (272 aa).

Residues 1 to 13 are compositionally biased toward polar residues; sequence MHLYKTSTPSTRN. 2 disordered regions span residues 1 to 27 and 222 to 272; these read MHLY…PRNN and NPVD…RRSK.

The protein belongs to the universal ribosomal protein uL2 family. Part of the 50S ribosomal subunit.

It is found in the plastid. The protein localises to the chloroplast. The sequence is that of Large ribosomal subunit protein uL2cz/uL2cy (rpl2-A) from Buxus microphylla (Littleleaf boxwood).